Reading from the N-terminus, the 155-residue chain is Small ribosomal subunit protein uS7 (155 aa).

It belongs to the universal ribosomal protein uS7 family. Part of the 30S ribosomal subunit. Contacts proteins S9 and S11.

Its function is as follows. One of the primary rRNA binding proteins, it binds directly to 16S rRNA where it nucleates assembly of the head domain of the 30S subunit. Is located at the subunit interface close to the decoding center, probably blocks exit of the E-site tRNA. The protein is Small ribosomal subunit protein uS7 of Kosmotoga olearia (strain ATCC BAA-1733 / DSM 21960 / TBF 19.5.1).